Here is a 1027-residue protein sequence, read N- to C-terminus: Translation initiation factor IF-2 (1027 aa).

The interval 31 to 433 (YVKSASSTVE…GGVRLPRGNG (403 aa)) is disordered. Gly residues predominate over residues 57-68 (KKGGGDSNGRAG). A compositionally biased stretch (pro residues) spans 110–122 (GPKPGPKPGPKAP). Low complexity predominate over residues 123–145 (APETKPFEEAPAPAAKADAPAQP). Over residues 148–171 (EQPRSEQPRSEQPRSEQPRSERSG) the composition is skewed to basic and acidic residues. Composition is skewed to pro residues over residues 174-188 (PGGP…PKPG) and 201-212 (PPKPQSPKPGPR). Over residues 237 to 268 (PGGGQRQGGQGPGRGGPQGGRPDRQGGGGQGA) the composition is skewed to gly residues. Residues 293 to 302 (GMMPPRPNPG) show a composition bias toward pro residues. Residues 311-397 (SGGGPGGGRG…GAAGAFGRPG (87 aa)) are compositionally biased toward gly residues. Residues 401-410 (RRGRKSKRQK) are compositionally biased toward basic residues. The tr-type G domain occupies 523-695 (SRPPVVTVMG…ILLTADATLD (173 aa)). The tract at residues 532–539 (GHVDHGKT) is G1. Residue 532–539 (GHVDHGKT) participates in GTP binding. A G2 region spans residues 557–561 (GITQH). The tract at residues 582 to 585 (DTPG) is G3. GTP-binding positions include 582 to 586 (DTPGH) and 636 to 639 (NKID). The segment at 636–639 (NKID) is G4. The interval 672–674 (SAR) is G5.

The protein belongs to the TRAFAC class translation factor GTPase superfamily. Classic translation factor GTPase family. IF-2 subfamily.

It is found in the cytoplasm. Its function is as follows. One of the essential components for the initiation of protein synthesis. Protects formylmethionyl-tRNA from spontaneous hydrolysis and promotes its binding to the 30S ribosomal subunits. Also involved in the hydrolysis of GTP during the formation of the 70S ribosomal complex. In Saccharopolyspora erythraea (strain ATCC 11635 / DSM 40517 / JCM 4748 / NBRC 13426 / NCIMB 8594 / NRRL 2338), this protein is Translation initiation factor IF-2.